We begin with the raw amino-acid sequence, 103 residues long: MTSKLAVAFLAVFLLSAALCEAAVLARVSAELRCQCINTHSTPFHPKFIKELRVIESGPHCENSEIIVKLVNGKEVCLDPKEKWVQKVVQIFLKRTEKQQQQQ.

Residues methionine 1 to leucine 25 form the signal peptide. Arginine 27 bears the Citrulline mark. 2 disulfides stabilise this stretch: cysteine 34–cysteine 61 and cysteine 36–cysteine 77.

Belongs to the intercrine alpha (chemokine CxC) family. As to quaternary structure, homodimer. Interacts with TNFAIP6 (via Link domain); this interaction interferes with chemokine binding to glycosaminoglycans. Citrullination at Arg-27 prevents proteolysis, and dampens tissue inflammation, it also enhances leukocytosis, possibly through impaired chemokine clearance from the blood circulation. In terms of tissue distribution, alveolar macrophages.

Its subcellular location is the secreted. Chemotactic factor that mediates inflammatory response by attracting neutrophils, basophils, and T-cells to clear pathogens and protect the host from infection. Also plays an important role in neutrophil activation. Released in response to an inflammatory stimulus, exerts its effect by binding to the G-protein-coupled receptors CXCR1 and CXCR2, primarily found in neutrophils, monocytes and endothelial cells. G-protein heterotrimer (alpha, beta, gamma subunits) constitutively binds to CXCR1/CXCR2 receptor and activation by IL8 leads to beta and gamma subunits release from Galpha (GNAI2 in neutrophils) and activation of several downstream signaling pathways including PI3K and MAPK pathways. This Sus scrofa (Pig) protein is Interleukin-8 (CXCL8).